Here is a 471-residue protein sequence, read N- to C-terminus: Ubiquitin carboxyl-terminal hydrolase calypso (471 aa).

Positions 45–276 constitute a UCH catalytic domain; the sequence is GWLELESDPG…IRFNLMAVVP (232 aa). Cys131 (nucleophile) is an active-site residue. Catalysis depends on His213, which acts as the Proton donor. In terms of domain architecture, ULD spans 375-403; the sequence is NYDKFICTFLSMLAHQGVLGELVSQHLLP. The segment at 405–471 is positively charged C-terminal tail required for binding nucleosomes; sequence KKVSGQGAAN…KGRNKCRKRK (67 aa). The tract at residues 410–471 is disordered; that stretch reads QGAANRISKQ…KGRNKCRKRK (62 aa). The segment covering 420 to 447 has biased composition (low complexity); sequence STTASAGGSTTGATASTPKTQQQQAAAA. Basic residues predominate over residues 457–471; that stretch reads PGRRRKGRNKCRKRK.

It belongs to the peptidase C12 family. BAP1 subfamily. In terms of assembly, catalytic component of the polycomb repressive deubiquitinase (PR-DUB) complex, at least composed of caly/calypso, Asx and sba (MBD5/6 homolog). The PR-DUB complex associates with nucleosomes to mediate deubiquitination of histone H2AK118ub1 substrates; the association requires the positively charged C-terminal tail of caly, probably due to direct binding of DNA. Interacts (via ULD domain) with Asx (via DEUBAD domain); the interaction produces a stable heterodimer with a composite binding site for ubiquitin. Homodimerizes (via coiled-coil hinge-region between the UCH and ULD domains) to mediate assembly of 2 copies of the caly-Asx heterodimer into a bisymmetric tetramer; dimerization enhances PR-DUB association with nucleosomes.

The protein localises to the nucleus. The enzyme catalyses Thiol-dependent hydrolysis of ester, thioester, amide, peptide and isopeptide bonds formed by the C-terminal Gly of ubiquitin (a 76-residue protein attached to proteins as an intracellular targeting signal).. Catalytic component of the polycomb repressive deubiquitinase (PR-DUB) complex, a complex that specifically mediates deubiquitination of histone H2A monoubiquitinated at 'Lys-119' (H2AK118ub1). Mediates bisymmetric organization of the PR-DUB complex and is involved in association with nucleosomes to mediate deubiquitination. Does not deubiquitinate monoubiquitinated histone H2B. Required to maintain the transcriptionally repressive state of homeotic genes throughout development. The PR-DUB complex has weak or no activity toward 'Lys-48'- and 'Lys-63'-linked polyubiquitin chains. Polycomb group (PcG) protein. The polypeptide is Ubiquitin carboxyl-terminal hydrolase calypso (Drosophila yakuba (Fruit fly)).